A 931-amino-acid polypeptide reads, in one-letter code: Protocadherin gamma-A1 (931 aa).

Residues 1-28 (MKIQKKLTGCSRLMLLCLSLELLLEAGA) form the signal peptide. Cadherin domains lie at 29 to 133 (GNIH…TPQF), 134 to 242 (QLEE…PPAF), 243 to 347 (TQAQ…APEV), 348 to 452 (TITS…SPVF), 453 to 562 (HQDS…APEI), and 570 to 682 (DGST…EPSA). The Extracellular segment spans residues 29-692 (GNIHYSVPEE…KPNDSDLTLY (664 aa)). 3 N-linked (GlcNAc...) asparagine glycosylation sites follow: Asn-265, Asn-419, and Asn-545. N-linked (GlcNAc...) asparagine glycosylation occurs at Asn-685. Residues 693 to 713 (LVVAAAAVSCVFLAFVIVLLA) traverse the membrane as a helical segment. Residues 714 to 931 (HRLRRWHKSR…KKKSGKKEKK (218 aa)) are Cytoplasmic-facing. Disordered stretches follow at residues 801 to 840 (KKEPFSQQAPPNTDWRFSQAQRPGTSGSQNGDDTGTWPNN) and 901 to 931 (ATLTNAAGKRDGKAPAGGNGNKKKSGKKEKK). Residues 805–840 (FSQQAPPNTDWRFSQAQRPGTSGSQNGDDTGTWPNN) show a composition bias toward polar residues. Residues 921 to 931 (NKKKSGKKEKK) are compositionally biased toward basic residues.

It is found in the cell membrane. Functionally, potential calcium-dependent cell-adhesion protein. May be involved in the establishment and maintenance of specific neuronal connections in the brain. This is Protocadherin gamma-A1 (PCDHGA1) from Homo sapiens (Human).